The following is a 354-amino-acid chain: Rhodopsin (354 aa).

At 1–36 the chain is on the extracellular side; sequence MNGTEGPNFYVPFSNKSGVVRSPFEYPQYYLAEPWQ. Asparagine 2 and asparagine 15 each carry an N-linked (GlcNAc...) asparagine glycan. The chain crosses the membrane as a helical span at residues 37-61; that stretch reads YSVLAAYMFLLILLGFPVNFLTLYV. Residues 62–73 lie on the Cytoplasmic side of the membrane; that stretch reads TIQHKKLRTPLN. A helical transmembrane segment spans residues 74-96; the sequence is YILLNLAFANHFMVFGGFPVTMY. The Extracellular segment spans residues 97–110; the sequence is SSMHGYFVFGQTGC. Cysteine 110 and cysteine 187 are joined by a disulfide. A helical transmembrane segment spans residues 111-133; sequence YIEGFFATMGGEIALWSLVVLAI. The 'Ionic lock' involved in activated form stabilization motif lies at 134–136; sequence ERY. The Cytoplasmic segment spans residues 134–152; that stretch reads ERYVVVCKPMSNFRFGENH. A helical transmembrane segment spans residues 153–173; that stretch reads AIMGVMMTWIMALACAAPPLF. The Extracellular segment spans residues 174–202; it reads GWSRYIPEGMQCSCGVDYYTLKPEVNNES. The helical transmembrane segment at 203-224 threads the bilayer; it reads FVIYMFLVHFTIPLMIIFFCYG. Over 225–252 the chain is Cytoplasmic; it reads RLVCTVKEAAAQQQESATTQKAEKEVTR. The helical transmembrane segment at 253-274 threads the bilayer; sequence MVIIMVVAFLICWVPYASVAFY. Residues 275 to 286 are Extracellular-facing; sequence IFSNQGTDFGPI. The helical transmembrane segment at 287–308 threads the bilayer; the sequence is FMTVPAFFAKSSAIYNPVIYIV. The residue at position 296 (lysine 296) is an N6-(retinylidene)lysine. At 309-354 the chain is on the cytoplasmic side; sequence LNKQFRNCMITTICCGKNPFGDDETTSAATSKTEASSVSSSQVSPA. 2 S-palmitoyl cysteine lipidation sites follow: cysteine 322 and cysteine 323. Residues 332 to 354 are disordered; that stretch reads ETTSAATSKTEASSVSSSQVSPA. The segment covering 334–354 has biased composition (low complexity); the sequence is TSAATSKTEASSVSSSQVSPA.

This sequence belongs to the G-protein coupled receptor 1 family. Opsin subfamily. Post-translationally, contains one covalently linked retinal chromophore. Upon light absorption, the covalently bound 11-cis-retinal is converted to all-trans-retinal. After hydrolysis of the Schiff base and release of the covalently bound all-trans-retinal, active rhodopsin is regenerated by binding of a fresh molecule of 11-cis-retinal.

Its subcellular location is the membrane. It is found in the cell projection. The protein localises to the cilium. It localises to the photoreceptor outer segment. Functionally, photoreceptor required for image-forming vision at low light intensity. Required for photoreceptor cell viability after birth. Light-induced isomerization of 11-cis to all-trans retinal triggers a conformational change that activates signaling via G-proteins. Subsequent receptor phosphorylation mediates displacement of the bound G-protein alpha subunit by arrestin and terminates signaling. In Ambystoma tigrinum (Eastern tiger salamander), this protein is Rhodopsin (RHO).